The chain runs to 651 residues: Acetyl-coenzyme A synthetase (651 aa).

Residues 189–192, Thr311, and Asn335 each bind CoA; that span reads RGGK. Residues 387-389, 411-416, Asp500, and Arg515 each bind ATP; these read GEP and DTWWQT. A CoA-binding site is contributed by Ser523. Arg526 contacts ATP. Mg(2+) is bound by residues Val537, His539, and Val542. Arg586 contributes to the CoA binding site. Lys611 is subject to N6-acetyllysine.

Belongs to the ATP-dependent AMP-binding enzyme family. Mg(2+) serves as cofactor. Acetylated. Deacetylation by the SIR2-homolog deacetylase activates the enzyme.

It carries out the reaction acetate + ATP + CoA = acetyl-CoA + AMP + diphosphate. Its function is as follows. Catalyzes the conversion of acetate into acetyl-CoA (AcCoA), an essential intermediate at the junction of anabolic and catabolic pathways. AcsA undergoes a two-step reaction. In the first half reaction, AcsA combines acetate with ATP to form acetyl-adenylate (AcAMP) intermediate. In the second half reaction, it can then transfer the acetyl group from AcAMP to the sulfhydryl group of CoA, forming the product AcCoA. The protein is Acetyl-coenzyme A synthetase of Brucella abortus (strain S19).